The primary structure comprises 198 residues: Small ribosomal subunit protein uS4 (198 aa).

The region spanning 91 to 154 (SRLDNVVYRL…KNLNIVQEAV (64 aa)) is the S4 RNA-binding domain.

Belongs to the universal ribosomal protein uS4 family. In terms of assembly, part of the 30S ribosomal subunit. Contacts protein S5. The interaction surface between S4 and S5 is involved in control of translational fidelity.

In terms of biological role, one of the primary rRNA binding proteins, it binds directly to 16S rRNA where it nucleates assembly of the body of the 30S subunit. With S5 and S12 plays an important role in translational accuracy. This is Small ribosomal subunit protein uS4 from Onion yellows phytoplasma (strain OY-M).